The chain runs to 171 residues: Neuronal vesicle trafficking-associated protein 2 (171 aa).

A disordered region spans residues 1–21 (MVKLNGNPGEKGAKPPSVEDG). The Cytoplasmic segment spans residues 1–71 (MVKLNGNPGE…FRVPKIAEFT (71 aa)). The chain crosses the membrane as a helical; Signal-anchor for type II membrane protein span at residues 72–92 (VTILVSLALAFLACIVFLVVY). At 93–171 (KAFTYDHSCP…EPKPPKTQGH (79 aa)) the chain is on the lumenal side.

Belongs to the NSG family.

Its subcellular location is the membrane. It localises to the golgi apparatus. The protein localises to the trans-Golgi network membrane. The protein resides in the cell projection. It is found in the dendrite. Its subcellular location is the endosome membrane. It localises to the early endosome membrane. The protein localises to the late endosome membrane. The protein resides in the lysosome lumen. It is found in the cytoplasmic vesicle membrane. Its subcellular location is the golgi stack membrane. It localises to the endosome. The protein localises to the multivesicular body membrane. The polypeptide is Neuronal vesicle trafficking-associated protein 2 (Rattus norvegicus (Rat)).